Reading from the N-terminus, the 213-residue chain is Protein Syd (213 aa).

The protein belongs to the Syd family.

It is found in the cell inner membrane. Its function is as follows. Interacts with the SecY protein in vivo. May bind preferentially to an uncomplexed state of SecY, thus functioning either as a chelating agent for excess SecY in the cell or as a regulatory factor that negatively controls the translocase function. The sequence is that of Protein Syd from Shewanella halifaxensis (strain HAW-EB4).